We begin with the raw amino-acid sequence, 175 residues long: NADH-quinone oxidoreductase subunit I (175 aa).

4Fe-4S ferredoxin-type domains lie at 69–98 (KRDEQGRERCTACFCCMWICPANAIHIEAA) and 115–144 (KKFEINLLRCIFCGLCEEACPKGAIYLDGT). The [4Fe-4S] cluster site is built by Cys-78, Cys-81, Cys-84, Cys-88, Cys-124, Cys-127, Cys-130, and Cys-134.

It belongs to the complex I 23 kDa subunit family. In terms of assembly, NDH-1 is composed of 14 different subunits. Subunits NuoA, H, J, K, L, M, N constitute the membrane sector of the complex. [4Fe-4S] cluster is required as a cofactor.

Its subcellular location is the cell inner membrane. It carries out the reaction a quinone + NADH + 5 H(+)(in) = a quinol + NAD(+) + 4 H(+)(out). NDH-1 shuttles electrons from NADH, via FMN and iron-sulfur (Fe-S) centers, to quinones in the respiratory chain. The immediate electron acceptor for the enzyme in this species is believed to be ubiquinone. Couples the redox reaction to proton translocation (for every two electrons transferred, four hydrogen ions are translocated across the cytoplasmic membrane), and thus conserves the redox energy in a proton gradient. The polypeptide is NADH-quinone oxidoreductase subunit I (Leptospira biflexa serovar Patoc (strain Patoc 1 / Ames)).